Reading from the N-terminus, the 392-residue chain is ATP phosphoribosyltransferase regulatory subunit (392 aa).

This sequence belongs to the class-II aminoacyl-tRNA synthetase family. HisZ subfamily. Heteromultimer composed of HisG and HisZ subunits.

The protein localises to the cytoplasm. It participates in amino-acid biosynthesis; L-histidine biosynthesis; L-histidine from 5-phospho-alpha-D-ribose 1-diphosphate: step 1/9. Required for the first step of histidine biosynthesis. May allow the feedback regulation of ATP phosphoribosyltransferase activity by histidine. This Prochlorococcus marinus (strain MIT 9211) protein is ATP phosphoribosyltransferase regulatory subunit.